Consider the following 623-residue polypeptide: MPKLEQRFDYVKIGLASPERIRQWGERTLPNNQVVGEVTKPETINYRTLKPEMDGLFCERIFGPAKDWECHCGKYKRVRHRGIVCERCGVEVTESRVRRHRMGYIKLAAPVTHVWYLKGIPSYMATLLDMPLRDVEQIVYFNAYVVLDPGNADTLSYKQLLTEDQWIEIEDQIYSEDSQLEGIEVGIGAEAVQRLLQDIKLETEAETLREDIGNAKGQKRAKLIKRLRVIDNFVGTGSQTDWMVLSVIPVIPPDLRPMVQLDGGRFATSDLNDLYRRVINRNNRLARLQEILAPEIIVRNEKRMLQEAVDALIDNGRRGRTVVGANNRPLKSLSDIIEGKQGRFRQNLLGKRVDYSGRSVIVVGPKLKMHQCGLPKEMAIELFQPFVIHRLIGQGLVNNIKAAKRLIQRNDPVIWDVLEEVIEGHPVMLNRAPTLHRLGIQAFEPILVDGRAIQLHPLVCPAFNADFDGDQMAVHVPLSIEAQSEARLLMLASNNILSPATGRPIVTPSQDMVLGAYYLTADNPGRQNGAGKYFAGLDDAIMAYEQQQVDLHAYVWVRFDGPVDDGEDDVEPEVETSADGVVTQTYPSRRIRKDADGTLISQYIRTTPGRIIYNKTIQDSLAS.

4 residues coordinate Zn(2+): Cys-70, Cys-72, Cys-85, and Cys-88. Residues Asp-466, Asp-468, and Asp-470 each contribute to the Mg(2+) site.

It belongs to the RNA polymerase beta' chain family. RpoC1 subfamily. As to quaternary structure, in cyanobacteria the RNAP catalytic core is composed of 2 alpha, 1 beta, 1 beta', 1 gamma and 1 omega subunit. When a sigma factor is associated with the core the holoenzyme is formed, which can initiate transcription. The cofactor is Mg(2+). It depends on Zn(2+) as a cofactor.

It catalyses the reaction RNA(n) + a ribonucleoside 5'-triphosphate = RNA(n+1) + diphosphate. DNA-dependent RNA polymerase catalyzes the transcription of DNA into RNA using the four ribonucleoside triphosphates as substrates. The polypeptide is DNA-directed RNA polymerase subunit gamma (Acaryochloris marina (strain MBIC 11017)).